The following is a 662-amino-acid chain: MNFPWDQLLVKGNWMITMAQIGAPFLVIGLIAVITYFKLWKYLYKEWFTSVDHKKIGIMYLICAVLMFVRGGIDALLIRAQLTVPDNKFLESNHYNEIFSTHGVIMIIFMAMPFIFGLWNIVVPLQIGARDVAFPVLNNVSFWLFFAGMILFNLSFIIGGSPAAGWTNYAPLAGEFSPGPGVNYYLIAIQISGLGTLATGINFFVTILRCKTPTMKFMQMPMFTVTTFITTLIVILAFPPLTVALALMTTDRIFDTAFFTVAHGGMPMLWANFFWVWGHPEVYIVILPAFGIYSEIIPTFARKRLFGHQSMVWATAGIAFLSFLVWVHHFFTMGNGALINSFFSISTMLIGIPTGVKLFNWLLTLYKGRITFESPMLFSLAFIPNFLLGGVTGVMLAMASADYQYHNTYFLVAHFHYTLVTGVVFACLAGLIFWYPKMMGYKLNETLNKWCFWFFMIGFNVCFLPQFILGLDGMPRRLYTYMPSDGWFLLNLISTIGALLMAIGFLFLVVSIVYSHFKSPREATGDNWDGLGRTLEWTTASAIPPKYNFAITPDWNDYDTFVDMKEHGRHYLDNHNYKDIHMPNNTPVGFWIGIFMTIGGFFLIFETVIPALICLFGIFGTMIYRSFQIDHGYHIPAAEVAETEARLREARIKEREAVSHES.

A run of 2 helical transmembrane segments spans residues 14 to 34 (WMIT…IAVI) and 58 to 78 (IMYL…ALLI). Fe(II)-heme a is bound at residue His102. The next 8 helical transmembrane spans lie at 103–123 (GVIM…NIVV), 140–160 (VSFW…IIGG), 187–207 (IAIQ…FVTI), 228–248 (FITT…LALM), 273–293 (FFWV…FGIY), 311–331 (MVWA…HHFF), 336–356 (GALI…PTGV), and 376–396 (MLFS…GVML). Residues His279, Tyr283, His328, and His329 each contribute to the Cu cation site. The 1'-histidyl-3'-tyrosine (His-Tyr) cross-link spans 279-283 (HPEVY). Position 414 (His414) interacts with heme a3. The next 5 membrane-spanning stretches (helical) occupy residues 415 to 435 (FHYT…IFWY), 451 to 471 (CFWF…ILGL), 493 to 513 (ISTI…VSIV), 587 to 604 (PVGF…FFLI), and 608 to 627 (VIPA…YRSF). His416 is a binding site for Fe(II)-heme a.

It belongs to the heme-copper respiratory oxidase family. It depends on Cu cation as a cofactor. Ferriheme a is required as a cofactor. The cofactor is Heme A3..

Its subcellular location is the cell membrane. The enzyme catalyses 2 a quinol + O2 = 2 a quinone + 2 H2O. The protein operates within energy metabolism; oxidative phosphorylation. Functionally, catalyzes quinol oxidation with the concomitant reduction of oxygen to water. The polypeptide is Probable quinol oxidase subunit 1 (qoxB) (Staphylococcus aureus (strain USA300)).